We begin with the raw amino-acid sequence, 146 residues long: Probable acetyltransferase HI_0677 (146 aa).

The region spanning 1 to 146 is the N-acetyltransferase domain; sequence MKLFKAEQWN…ERLFELSLSC (146 aa).

This chain is Probable acetyltransferase HI_0677, found in Haemophilus influenzae (strain ATCC 51907 / DSM 11121 / KW20 / Rd).